A 303-amino-acid chain; its full sequence is Recombination-associated protein RdgC (303 aa).

The protein belongs to the RdgC family.

It is found in the cytoplasm. The protein resides in the nucleoid. May be involved in recombination. The chain is Recombination-associated protein RdgC from Shewanella frigidimarina (strain NCIMB 400).